The sequence spans 201 residues: UPF0301 protein Bpet0561 (201 aa).

The protein belongs to the UPF0301 (AlgH) family.

The chain is UPF0301 protein Bpet0561 from Bordetella petrii (strain ATCC BAA-461 / DSM 12804 / CCUG 43448).